The primary structure comprises 102 residues: Small ribosomal subunit protein uS10 (102 aa).

It belongs to the universal ribosomal protein uS10 family. In terms of assembly, part of the 30S ribosomal subunit.

In terms of biological role, involved in the binding of tRNA to the ribosomes. This Akkermansia muciniphila (strain ATCC BAA-835 / DSM 22959 / JCM 33894 / BCRC 81048 / CCUG 64013 / CIP 107961 / Muc) protein is Small ribosomal subunit protein uS10.